The chain runs to 333 residues: Eukaryotic translation initiation factor 2 subunit 2 (333 aa).

Disordered regions lie at residues 1–119 and 139–164; these read MSGD…DLDI and ILEK…NQTG. Position 2 is an N-acetylserine (Ser-2). 2 positions are modified to phosphoserine: Ser-2 and Ser-13. Over residues 13–22 the composition is skewed to basic residues; sequence SKKKKKKKKP. 2 positions are modified to phosphothreonine: Thr-31 and Thr-36. Residues 40-51 are compositionally biased toward basic and acidic residues; that stretch reads ETKEVEPEPTED. The residue at position 67 (Ser-67) is a Phosphoserine. The span at 96-105 shows a compositional bias: basic and acidic residues; the sequence is EGVKDLKIES. A Glycyl lysine isopeptide (Lys-Gly) (interchain with G-Cter in SUMO2) cross-link involves residue Lys-102. Ser-105 carries the post-translational modification Phosphoserine. 2 stretches are compositionally biased toward acidic residues: residues 106 to 118 and 139 to 149; these read DVQE…DDLD and ILEKDEALEDE. Thr-111 carries the post-translational modification Phosphothreonine. Residues Ser-158 and Ser-218 each carry the phosphoserine modification. Residues Lys-265 and Lys-293 each carry the N6-acetyllysine modification. The C4-type zinc finger occupies 281–305; it reads CHTCRSPDTILQKDTRLYFLQCETC.

It belongs to the eIF-2-beta/eIF-5 family. In terms of assembly, eukaryotic translation initiation factor 2 eIF2 is a heterotrimeric complex composed of an alpha (EIF2S1), a beta (EIF2S2) and a gamma (EIF2S3) chain. eIF2 is member of the 43S pre-initiation complex (43S PIC). eIF2 forms a complex with at least CELF1/CUGBP1, CALR, CALR3, EIF2S1, EIF2S2, HSP90B1 and HSPA5. Interacts with BZW2/5MP1. Interacts with EIF5.

Its subcellular location is the cytoplasm. It is found in the cytosol. In terms of biological role, component of the eIF2 complex that functions in the early steps of protein synthesis by forming a ternary complex with GTP and initiator tRNA. This complex binds to a 40S ribosomal subunit, followed by mRNA binding to form the 43S pre-initiation complex (43S PIC). Junction of the 60S ribosomal subunit to form the 80S initiation complex is preceded by hydrolysis of the GTP bound to eIF2 and release of an eIF2-GDP binary complex. In order for eIF2 to recycle and catalyze another round of initiation, the GDP bound to eIF2 must exchange with GTP by way of a reaction catalyzed by eIF2B. The protein is Eukaryotic translation initiation factor 2 subunit 2 (EIF2S2) of Pongo abelii (Sumatran orangutan).